A 453-amino-acid polypeptide reads, in one-letter code: MTPNTSPGSTLPRAQVLAERAFSTLEKFLHIEAFSGVVLLLAAAAALIWANSPYADGYHHFWHTAVSFSIGSWSVSESLHFLINDGLMTIFFLVVGMEIRREIHEGALANMRLAALPLAAALGGVVVPALIYFILNPGGEAAHGWAVPTATDIAFAVGVLALLGRSIPSNVRVFLLALAIIDDIVAVLIIAVFYSGGMDYSGFIIAAVGILMVLGMQRIGIASAYPYVIPGAVLWFGLLKTGAHPTLAGVVLGLMTPVFAPHARTHPLELASKALKDLWNQTANSTPDPHHLAHPLKQLRRAQRDLLPPVSRVQMALHPYVAFGIMPLFALANAGVSLDGIDMSATGSMSVMLGVLIALVAGKPLGIIGASFLMVRMGWCALPPGVTWGGVCLVGLLAGIGFTMSIFIATLAFNDPNLLGAAKLGILLASLSAAVLGLAWGFFQAKRKQPAVA.

A run of 11 helical transmembrane segments spans residues 28 to 48 (FLHIEAFSGVVLLLAAAAALI), 79 to 99 (LHFLINDGLMTIFFLVVGMEI), 115 to 135 (ALPLAAALGGVVVPALIYFIL), 144 to 164 (GWAVPTATDIAFAVGVLALLG), 173 to 193 (VFLLALAIIDDIVAVLIIAVF), 196 to 216 (GGMDYSGFIIAAVGILMVLGM), 241 to 261 (TGAHPTLAGVVLGLMTPVFAP), 321 to 341 (VAFGIMPLFALANAGVSLDGI), 355 to 375 (VLIALVAGKPLGIIGASFLMV), 393 to 413 (LVGLLAGIGFTMSIFIATLAF), and 424 to 444 (LGILLASLSAAVLGLAWGFFQ).

It belongs to the NhaA Na(+)/H(+) (TC 2.A.33) antiporter family.

The protein localises to the cell inner membrane. The catalysed reaction is Na(+)(in) + 2 H(+)(out) = Na(+)(out) + 2 H(+)(in). Na(+)/H(+) antiporter that extrudes sodium in exchange for external protons. The sequence is that of Na(+)/H(+) antiporter NhaA from Janthinobacterium sp. (strain Marseille) (Minibacterium massiliensis).